Consider the following 98-residue polypeptide: Large ribosomal subunit protein uL23 (98 aa).

The protein belongs to the universal ribosomal protein uL23 family. As to quaternary structure, part of the 50S ribosomal subunit. Contacts protein L29, and trigger factor when it is bound to the ribosome.

In terms of biological role, one of the early assembly proteins it binds 23S rRNA. One of the proteins that surrounds the polypeptide exit tunnel on the outside of the ribosome. Forms the main docking site for trigger factor binding to the ribosome. The chain is Large ribosomal subunit protein uL23 from Rickettsia akari (strain Hartford).